Consider the following 173-residue polypeptide: Archaemetzincin (173 aa).

His-130 provides a ligand contact to Zn(2+). The Proton acceptor role is filled by Glu-131. Zn(2+) contacts are provided by His-134, His-140, Cys-141, Cys-146, Cys-165, and Cys-168.

It belongs to the peptidase M54 family. In terms of assembly, monomer. Zn(2+) serves as cofactor.

Functionally, probable zinc metalloprotease whose natural substrate is unknown. The sequence is that of Archaemetzincin from Haloquadratum walsbyi (strain DSM 16790 / HBSQ001).